Here is a 183-residue protein sequence, read N- to C-terminus: ATP synthase subunit b, chloroplastic (183 aa).

A helical transmembrane segment spans residues 25–45; that stretch reads DILATNLINLTVVVGVLIFFG.

It belongs to the ATPase B chain family. In terms of assembly, F-type ATPases have 2 components, F(1) - the catalytic core - and F(0) - the membrane proton channel. F(1) has five subunits: alpha(3), beta(3), gamma(1), delta(1), epsilon(1). F(0) has four main subunits: a(1), b(1), b'(1) and c(10-14). The alpha and beta chains form an alternating ring which encloses part of the gamma chain. F(1) is attached to F(0) by a central stalk formed by the gamma and epsilon chains, while a peripheral stalk is formed by the delta, b and b' chains.

The protein resides in the plastid. It is found in the chloroplast thylakoid membrane. F(1)F(0) ATP synthase produces ATP from ADP in the presence of a proton or sodium gradient. F-type ATPases consist of two structural domains, F(1) containing the extramembraneous catalytic core and F(0) containing the membrane proton channel, linked together by a central stalk and a peripheral stalk. During catalysis, ATP synthesis in the catalytic domain of F(1) is coupled via a rotary mechanism of the central stalk subunits to proton translocation. Functionally, component of the F(0) channel, it forms part of the peripheral stalk, linking F(1) to F(0). The chain is ATP synthase subunit b, chloroplastic from Sorghum bicolor (Sorghum).